A 288-amino-acid polypeptide reads, in one-letter code: Hyaluronidase (288 aa).

Residue asparagine 36 is glycosylated (N-linked (GlcNAc...) asparagine). Glutamate 66 (proton donor) is an active-site residue. An intrachain disulfide couples cysteine 142 to cysteine 154. An N-linked (GlcNAc...) asparagine glycan is attached at asparagine 282.

Belongs to the glycosyl hydrolase 56 family. Expressed by the venom gland.

The protein resides in the secreted. It carries out the reaction Random hydrolysis of (1-&gt;4)-linkages between N-acetyl-beta-D-glucosamine and D-glucuronate residues in hyaluronate.. In terms of biological role, hydrolyzes high molecular weight hyaluronic acid to produce small oligosaccharides. The polypeptide is Hyaluronidase (Polybia paulista (Neotropical social wasp)).